We begin with the raw amino-acid sequence, 709 residues long: Translation initiation factor IF-2 (709 aa).

Basic and acidic residues-rich tracts occupy residues 47-70 (DHQYRPNTGKKEEKKAEKKTEKPK) and 105-121 (KGKETKKTEAQQQEKKL). The tract at residues 47–157 (DHQYRPNTGK…QPAKKEKELP (111 aa)) is disordered. Over residues 125–137 (AKKKGKGPAKGKK) the composition is skewed to basic residues. Positions 138–149 (QAAPAAKQAPQP) are enriched in low complexity. Residues 240-409 (ERPPVVTIMG…LLVSEMEELK (170 aa)) enclose the tr-type G domain. The G1 stretch occupies residues 249 to 256 (GHVDHGKT). Residue 249–256 (GHVDHGKT) coordinates GTP. Positions 274-278 (GITQH) are G2. The segment at 295–298 (DTPG) is G3. GTP-binding positions include 295-299 (DTPGH) and 349-352 (NKID). The segment at 349 to 352 (NKID) is G4. Residues 385–387 (SAK) form a G5 region.

The protein belongs to the TRAFAC class translation factor GTPase superfamily. Classic translation factor GTPase family. IF-2 subfamily.

The protein resides in the cytoplasm. In terms of biological role, one of the essential components for the initiation of protein synthesis. Protects formylmethionyl-tRNA from spontaneous hydrolysis and promotes its binding to the 30S ribosomal subunits. Also involved in the hydrolysis of GTP during the formation of the 70S ribosomal complex. This is Translation initiation factor IF-2 from Geobacillus kaustophilus (strain HTA426).